Here is a 183-residue protein sequence, read N- to C-terminus: Cell division protein ZapC (183 aa).

This sequence belongs to the ZapC family. Interacts directly with FtsZ.

It is found in the cytoplasm. In terms of biological role, contributes to the efficiency of the cell division process by stabilizing the polymeric form of the cell division protein FtsZ. Acts by promoting interactions between FtsZ protofilaments and suppressing the GTPase activity of FtsZ. The sequence is that of Cell division protein ZapC from Xenorhabdus bovienii (strain SS-2004) (Xenorhabdus nematophila subsp. bovienii).